The sequence spans 645 residues: Meiosis induction protein kinase IME2/SME1 (645 aa).

The interval 1–24 (MVEKRSRQSSSSGSEFSVPPDVDN) is disordered. The span at 8 to 17 (QSSSSGSEFS) shows a compositional bias: low complexity. The Protein kinase domain occupies 38–386 (YQLIEKLGAG…AQELCEMPFF (349 aa)). ATP is bound by residues 44–52 (LGAGSFGCV) and Lys-67. Asp-193 functions as the Proton acceptor in the catalytic mechanism.

This sequence belongs to the protein kinase superfamily. Ser/Thr protein kinase family.

The catalysed reaction is L-seryl-[protein] + ATP = O-phospho-L-seryl-[protein] + ADP + H(+). It carries out the reaction L-threonyl-[protein] + ATP = O-phospho-L-threonyl-[protein] + ADP + H(+). Its function is as follows. Protein kinase which is essential for the initiation of meiosis and sporulation. The chain is Meiosis induction protein kinase IME2/SME1 (IME2) from Saccharomyces cerevisiae (strain ATCC 204508 / S288c) (Baker's yeast).